We begin with the raw amino-acid sequence, 238 residues long: Ribonuclease PH (238 aa).

Residues Arg-86 and 124–126 contribute to the phosphate site; that span reads GTR.

This sequence belongs to the RNase PH family. As to quaternary structure, homohexameric ring arranged as a trimer of dimers.

It catalyses the reaction tRNA(n+1) + phosphate = tRNA(n) + a ribonucleoside 5'-diphosphate. Phosphorolytic 3'-5' exoribonuclease that plays an important role in tRNA 3'-end maturation. Removes nucleotide residues following the 3'-CCA terminus of tRNAs; can also add nucleotides to the ends of RNA molecules by using nucleoside diphosphates as substrates, but this may not be physiologically important. Probably plays a role in initiation of 16S rRNA degradation (leading to ribosome degradation) during starvation. The polypeptide is Ribonuclease PH (Aliivibrio fischeri (strain ATCC 700601 / ES114) (Vibrio fischeri)).